A 44-amino-acid polypeptide reads, in one-letter code: GKCGDINAPCTSACDCCGKSVECDCYWGKECSCRESFFGAATXL.

Intrachain disulfides connect Cys3–Cys17, Cys10–Cys23, Cys16–Cys33, and Cys25–Cys31.

Expressed by the venom gland.

Its subcellular location is the secreted. In terms of biological role, insecticidal neurotoxin that reversibly inhibits the N-methyl-D-aspartate (NMDA)-subtype of ionotropic glutamate receptor (GRIN) and inhibits inactivation of insect sodium channels (Nav). In vivo, is highly toxic to insects. The polypeptide is U9-ctenitoxin-Co1a (Ctenus ornatus (Brazilian spider)).